A 119-amino-acid polypeptide reads, in one-letter code: Chorion class CA protein ERA.1 (119 aa).

Positions 1-21 (MSTFAVLLLCVQACLIQNVYS) are cleaved as a signal peptide. A left arm region spans residues 22-55 (QCLGRVGPGGPPLGPYGGPLGGPGYGPVGYGGCG). A central domain region spans residues 56-103 (GYGGSGIGNVAVAGELPVAGSTGVMGQVPVIGAVEFAGPACAVGSVSI). Residues 104–119 (SGACGPTCGCGGSPYY) are right arm.

This sequence belongs to the chorion protein family.

This protein is one of many from the eggshell of the silk moth. The sequence is that of Chorion class CA protein ERA.1 (ERA.1) from Bombyx mori (Silk moth).